The chain runs to 314 residues: Acetyl-coenzyme A carboxylase carboxyl transferase subunit beta, chloroplastic (314 aa).

In terms of domain architecture, CoA carboxyltransferase N-terminal spans 47–314 (LWTRCDNCEN…APWKEKNNQV (268 aa)). Zn(2+) contacts are provided by Cys51, Cys54, Cys70, and Cys73. The segment at 51 to 73 (CDNCENMLYIKFLKQNKGVCEEC) adopts a C4-type zinc-finger fold.

It belongs to the AccD/PCCB family. Acetyl-CoA carboxylase is a heterohexamer composed of biotin carboxyl carrier protein, biotin carboxylase and 2 subunits each of ACCase subunit alpha and ACCase plastid-coded subunit beta (accD). Requires Zn(2+) as cofactor.

It localises to the plastid. It is found in the chloroplast stroma. The enzyme catalyses N(6)-carboxybiotinyl-L-lysyl-[protein] + acetyl-CoA = N(6)-biotinyl-L-lysyl-[protein] + malonyl-CoA. The protein operates within lipid metabolism; malonyl-CoA biosynthesis; malonyl-CoA from acetyl-CoA: step 1/1. Its function is as follows. Component of the acetyl coenzyme A carboxylase (ACC) complex. Biotin carboxylase (BC) catalyzes the carboxylation of biotin on its carrier protein (BCCP) and then the CO(2) group is transferred by the transcarboxylase to acetyl-CoA to form malonyl-CoA. This chain is Acetyl-coenzyme A carboxylase carboxyl transferase subunit beta, chloroplastic, found in Angiopteris lygodiifolia (Turnip fern).